Reading from the N-terminus, the 121-residue chain is Small ribosomal subunit protein uS13 (121 aa).

The disordered stretch occupies residues 91–121 (HRMSLPVRGQRTRTNARTRRGSRKTVAGRKK). The span at 100–121 (QRTRTNARTRRGSRKTVAGRKK) shows a compositional bias: basic residues.

Belongs to the universal ribosomal protein uS13 family. In terms of assembly, part of the 30S ribosomal subunit. Forms a loose heterodimer with protein S19. Forms two bridges to the 50S subunit in the 70S ribosome.

Located at the top of the head of the 30S subunit, it contacts several helices of the 16S rRNA. In the 70S ribosome it contacts the 23S rRNA (bridge B1a) and protein L5 of the 50S subunit (bridge B1b), connecting the 2 subunits; these bridges are implicated in subunit movement. Contacts the tRNAs in the A and P-sites. The polypeptide is Small ribosomal subunit protein uS13 (Prochlorococcus marinus (strain MIT 9301)).